Here is a 335-residue protein sequence, read N- to C-terminus: Nuclear envelope-associated protein 2 (335 aa).

Coiled coils occupy residues 55–85 (RKEA…ELVA) and 125–260 (CSVL…LKKK). The Bipartite nuclear localization signal motif lies at 239 to 260 (KTKELESQLERQRRADQELKKK). A helical transmembrane segment spans residues 312-329 (FWDTSGFKIVVSMSMLIL).

Forms homomers and heteromers with NEAP1 and NEAP3. Interacts with SUN1 and SUN2.

Its subcellular location is the nucleus inner membrane. The protein localises to the nucleus. It is found in the nucleoplasm. This Arabidopsis thaliana (Mouse-ear cress) protein is Nuclear envelope-associated protein 2.